We begin with the raw amino-acid sequence, 361 residues long: MKQIIVNLKTKKYDIVISQSENDFFTALAKAAKTNMFFVITDKNVEKLHLKYFTVLLKRKGFNVKTAVISAGEIGKNIKSLSFLYDKALEAGIDRKSCAIALGGGVIGDVAGFFAATYMRGINYIQVPTTLLAMTDSSVGGKTAVNIKGGKNIAGVFYQPDLVWINSAFLSTLTERHIKNGLAEIIKYAFTFDKKFYSYLSDTLENGTVPPKDFEYIIYQSCSYKARVVEKDEKEITGLRAVLNFGHTFAHALETATKYKKFLHGEAVAVGMLFAVKLSLKLRICKPETYKEVENLLQKADFTLSTKNNARQMLSLMKKDKKSIDGNIKFILIKDIGKAVSTYVKDNVVLNVLKNFTGENK.

NAD(+) is bound by residues 105 to 109, 129 to 130, lysine 142, lysine 151, and 169 to 172; these read GVIGD, TT, and FLST. 3 residues coordinate Zn(2+): glutamate 184, histidine 247, and histidine 264.

This sequence belongs to the sugar phosphate cyclases superfamily. Dehydroquinate synthase family. The cofactor is Co(2+). Requires Zn(2+) as cofactor. NAD(+) is required as a cofactor.

It is found in the cytoplasm. The enzyme catalyses 7-phospho-2-dehydro-3-deoxy-D-arabino-heptonate = 3-dehydroquinate + phosphate. It participates in metabolic intermediate biosynthesis; chorismate biosynthesis; chorismate from D-erythrose 4-phosphate and phosphoenolpyruvate: step 2/7. In terms of biological role, catalyzes the conversion of 3-deoxy-D-arabino-heptulosonate 7-phosphate (DAHP) to dehydroquinate (DHQ). The polypeptide is 3-dehydroquinate synthase (Endomicrobium trichonymphae).